The following is a 635-amino-acid chain: Sodium-dependent multivitamin transporter (635 aa).

3 consecutive transmembrane segments (helical) span residues phenylalanine 24 to leucine 44, cysteine 68 to valine 88, and phenylalanine 101 to phenylalanine 121. N-linked (GlcNAc...) asparagine glycosylation is present at asparagine 138. The next 9 membrane-spanning stretches (helical) occupy residues valine 143–alanine 163, leucine 176–leucine 196, valine 199–isoleucine 219, phenylalanine 256–alanine 276, valine 297–alanine 317, phenylalanine 336–isoleucine 356, isoleucine 396–isoleucine 416, isoleucine 428–phenylalanine 448, and alanine 456–valine 476. 2 N-linked (GlcNAc...) asparagine glycosylation sites follow: asparagine 489 and asparagine 498. Residues leucine 528–leucine 548 traverse the membrane as a helical segment.

It belongs to the sodium:solute symporter (SSF) (TC 2.A.21) family. In terms of assembly, interacts with PDZD11. In terms of processing, may be glycosylated. As to expression, expressed in microvessels of the brain (at protein level). Expressed in heart, brain, placenta, lung, liver, skeletal muscle, kidney, and pancreas.

The protein resides in the cell membrane. It localises to the apical cell membrane. The enzyme catalyses biotin(out) + 2 Na(+)(out) = biotin(in) + 2 Na(+)(in). It catalyses the reaction (R)-pantothenate(out) + 2 Na(+)(out) = (R)-pantothenate(in) + 2 Na(+)(in). The catalysed reaction is (R)-lipoate(out) + 2 Na(+)(out) = (R)-lipoate(in) + 2 Na(+)(in). It carries out the reaction iodide(out) + 2 Na(+)(out) = iodide(in) + 2 Na(+)(in). Functionally, sodium-dependent multivitamin transporter that mediates the electrogenic transport of pantothenate, biotin, lipoate and iodide. Functions as a Na(+)-coupled substrate symporter where the stoichiometry of Na(+):substrate is 2:1, creating an electrochemical Na(+) gradient used as driving force for substrate uptake. Required for biotin and pantothenate uptake in the intestine across the brush border membrane. Plays a role in the maintenance of intestinal mucosa integrity, by providing the gut mucosa with biotin. Contributes to the luminal uptake of biotin and pantothenate into the brain across the blood-brain barrier. The polypeptide is Sodium-dependent multivitamin transporter (Homo sapiens (Human)).